The primary structure comprises 513 residues: Glutamyl-tRNA(Gln) amidotransferase subunit A (513 aa).

Catalysis depends on charge relay system residues Lys-85 and Ser-160. Ser-184 acts as the Acyl-ester intermediate in catalysis.

Belongs to the amidase family. GatA subfamily. In terms of assembly, heterotrimer of A, B and C subunits.

The catalysed reaction is L-glutamyl-tRNA(Gln) + L-glutamine + ATP + H2O = L-glutaminyl-tRNA(Gln) + L-glutamate + ADP + phosphate + H(+). Allows the formation of correctly charged Gln-tRNA(Gln) through the transamidation of misacylated Glu-tRNA(Gln) in organisms which lack glutaminyl-tRNA synthetase. The reaction takes place in the presence of glutamine and ATP through an activated gamma-phospho-Glu-tRNA(Gln). In Bifidobacterium longum subsp. infantis (strain ATCC 15697 / DSM 20088 / JCM 1222 / NCTC 11817 / S12), this protein is Glutamyl-tRNA(Gln) amidotransferase subunit A.